We begin with the raw amino-acid sequence, 210 residues long: MLTQHVSEARTRGAIHTARLIHTSDLDQETRDGARRMVIEAFRDPSGDSDFTDDFTDDDWDHALGGMHALISHHGALIAHGAVVQRRLMYRGPDGRGHALRCGYVEAVAVREDRRGDGLGTAVLDALEQVIRGAYQIGALSASDIARPMYIARGWLSWEGPTSVLTPTEGIVRTPEDDRSLFVLPVDLPDGLELDTAREITCDWRSGDPW.

In terms of domain architecture, N-acetyltransferase spans 21 to 189 (IHTSDLDQET…SLFVLPVDLP (169 aa)). Substrate is bound by residues aspartate 54 and 106 to 107 (EA). Residues 108–110 (VAV) and 115–120 (RGDGLG) contribute to the CoA site. Residues serine 141 and 176 to 177 (ED) each bind substrate.

The protein belongs to the AAC(2')-I acetyltransferase family. In terms of assembly, homodimer.

Its function is as follows. Catalyzes the coenzyme A-dependent acetylation of the 2' hydroxyl or amino group of a broad spectrum of aminoglycosides. It confers resistance to aminoglycosides. In Mycolicibacterium smegmatis (strain ATCC 700084 / mc(2)155) (Mycobacterium smegmatis), this protein is Aminoglycoside 2'-N-acetyltransferase (aac).